The following is a 716-amino-acid chain: Fatty acid oxidation complex subunit alpha (716 aa).

An enoyl-CoA hydratase/isomerase region spans residues 1 to 189 (MIYQSPTIQV…KVGAVDAVVA (189 aa)). Asp296 contacts substrate. The segment at 311 to 716 (KEVKNAAVLG…ATNNGSYYQA (406 aa)) is 3-hydroxyacyl-CoA dehydrogenase. NAD(+) contacts are provided by residues Met324, Asp343, 400–402 (VVE), Lys407, and Ser429. Catalysis depends on His450, which acts as the For 3-hydroxyacyl-CoA dehydrogenase activity. Position 453 (Asn453) interacts with NAD(+). Residues Asn500 and Tyr660 each coordinate substrate.

The protein in the N-terminal section; belongs to the enoyl-CoA hydratase/isomerase family. It in the C-terminal section; belongs to the 3-hydroxyacyl-CoA dehydrogenase family. As to quaternary structure, heterotetramer of two alpha chains (FadB) and two beta chains (FadA).

It carries out the reaction a (3S)-3-hydroxyacyl-CoA + NAD(+) = a 3-oxoacyl-CoA + NADH + H(+). The enzyme catalyses a (3S)-3-hydroxyacyl-CoA = a (2E)-enoyl-CoA + H2O. The catalysed reaction is a 4-saturated-(3S)-3-hydroxyacyl-CoA = a (3E)-enoyl-CoA + H2O. It catalyses the reaction (3S)-3-hydroxybutanoyl-CoA = (3R)-3-hydroxybutanoyl-CoA. It carries out the reaction a (3Z)-enoyl-CoA = a 4-saturated (2E)-enoyl-CoA. The enzyme catalyses a (3E)-enoyl-CoA = a 4-saturated (2E)-enoyl-CoA. Its pathway is lipid metabolism; fatty acid beta-oxidation. Involved in the aerobic and anaerobic degradation of long-chain fatty acids via beta-oxidation cycle. Catalyzes the formation of 3-oxoacyl-CoA from enoyl-CoA via L-3-hydroxyacyl-CoA. It can also use D-3-hydroxyacyl-CoA and cis-3-enoyl-CoA as substrate. The sequence is that of Fatty acid oxidation complex subunit alpha from Shewanella putrefaciens (strain CN-32 / ATCC BAA-453).